We begin with the raw amino-acid sequence, 358 residues long: GTPase Obg (358 aa).

Positions 1–159 (MKFVDEVTIR…RNLHLELRLL (159 aa)) constitute an Obg domain. The 175-residue stretch at 160 to 334 (ADVGLLGMPN…LAQDVMNRLE (175 aa)) folds into the OBG-type G domain. Residues 166 to 173 (GMPNAGKS), 191 to 195 (FTTLY), 213 to 216 (DIPG), 284 to 287 (NKLD), and 315 to 317 (SAL) contribute to the GTP site. Residues serine 173 and threonine 193 each contribute to the Mg(2+) site. The interval 337–358 (DEEAREAGERARREQRQEEGPE) is disordered. Residues 341 to 358 (REAGERARREQRQEEGPE) show a composition bias toward basic and acidic residues.

Belongs to the TRAFAC class OBG-HflX-like GTPase superfamily. OBG GTPase family. In terms of assembly, monomer. Requires Mg(2+) as cofactor.

It is found in the cytoplasm. An essential GTPase which binds GTP, GDP and possibly (p)ppGpp with moderate affinity, with high nucleotide exchange rates and a fairly low GTP hydrolysis rate. Plays a role in control of the cell cycle, stress response, ribosome biogenesis and in those bacteria that undergo differentiation, in morphogenesis control. The protein is GTPase Obg of Alkalilimnicola ehrlichii (strain ATCC BAA-1101 / DSM 17681 / MLHE-1).